Here is a 1367-residue protein sequence, read N- to C-terminus: Mediator of RNA polymerase II transcription subunit 23 (1367 aa).

Residues 1343-1367 form a disordered region; it reads PPQALSSGSPAPQANQVPTALPVTQ. Polar residues predominate over residues 1346–1367; sequence ALSSGSPAPQANQVPTALPVTQ.

This sequence belongs to the Mediator complex subunit 23 family. In terms of assembly, component of the Mediator complex, which is composed of MED1, MED4, MED6, MED7, MED8, MED9, MED10, MED11, MED12, MED13, MED13L, MED14, MED15, MED16, MED17, MED18, MED19, MED20, MED21, MED22, MED23, MED24, MED25, MED26, MED27, MED29, MED30, MED31, CCNC, CDK8 and CDC2L6/CDK11. The MED12, MED13, CCNC and CDK8 subunits form a distinct module termed the CDK8 module. Mediator containing the CDK8 module is less active than Mediator lacking this module in supporting transcriptional activation. Individual preparations of the Mediator complex lacking one or more distinct subunits have been variously termed ARC, CRSP, DRIP, PC2, SMCC and TRAP. Interacts with CDK8, CEBPB, CTNNB1, ELK1 and GLI3. Interacts with the adenovirus E1A protein.

It localises to the nucleus. Component of the Mediator complex, a coactivator involved in the regulated transcription of nearly all RNA polymerase II-dependent genes. Mediator functions as a bridge to convey information from gene-specific regulatory proteins to the basal RNA polymerase II transcription machinery. Mediator is recruited to promoters by direct interactions with regulatory proteins and serves as a scaffold for the assembly of a functional pre-initiation complex with RNA polymerase II and the general transcription factors. Also required for transcriptional activation subsequent to the assembly of the pre-initiation complex. Required for transcriptional activation by adenovirus E1A protein. Required for ELK1-dependent transcriptional activation in response to activated Ras signaling. This chain is Mediator of RNA polymerase II transcription subunit 23 (Med23), found in Rattus norvegicus (Rat).